The primary structure comprises 142 residues: ER-derived vesicles protein ERV15 (142 aa).

The Cytoplasmic portion of the chain corresponds to 1 to 7; sequence MSGTGLS. The chain crosses the membrane as a helical span at residues 8 to 28; it reads LFVTGLILNCLNSICQIYFTI. Over 29 to 55 the chain is Extracellular; sequence LYGDLEADYINSIELCKRVNRLSVPEA. Residues 56-76 traverse the membrane as a helical segment; it reads ILQAFISALFLFNGYWFVFLL. Topologically, residues 77 to 114 are cytoplasmic; that stretch reads NVPVLAYNASKVYKKTHLLDATDIFRKLGRCKIECFLK. Residues 115–135 form a helical membrane-spanning segment; the sequence is LGFYLLIFFFYFYRMVTALLE. The Extracellular segment spans residues 136–142; the sequence is NDANLIS.

This sequence belongs to the cornichon family.

The protein resides in the membrane. The polypeptide is ER-derived vesicles protein ERV15 (ERV15) (Saccharomyces cerevisiae (strain ATCC 204508 / S288c) (Baker's yeast)).